The primary structure comprises 407 residues: Shaggy-related protein kinase GSK1 (407 aa).

Residues 1 to 19 (MEAPPGPEPMELDAPPPPA) are compositionally biased toward pro residues. The segment at 1–21 (MEAPPGPEPMELDAPPPPAAV) is disordered. In terms of domain architecture, Protein kinase spans 68–352 (YMAERVVGTG…ALDACAHSFF (285 aa)). ATP-binding positions include 74 to 82 (VGTGSFGIV) and K97. D193 acts as the Proton acceptor in catalysis.

The protein belongs to the protein kinase superfamily. CMGC Ser/Thr protein kinase family. GSK-3 subfamily. As to quaternary structure, interacts with LIC. In terms of tissue distribution, highly expressed in the entire young panicles, spikelets, awns, vascular bundles of palea and lemma, stigma and rachilla. Expressed in root tips, root hairs, lamina joint in the collar region, vascular bundles of coleoptiles.

The enzyme catalyses L-seryl-[protein] + ATP = O-phospho-L-seryl-[protein] + ADP + H(+). The catalysed reaction is L-threonyl-[protein] + ATP = O-phospho-L-threonyl-[protein] + ADP + H(+). Probable serine-threonine kinase that may act as a negative regulator of brassinosteroid (BR) signaling during flower development. May have physiological roles in stress signal-transduction pathways. Phosphorylates LIC in response to BR perception. This chain is Shaggy-related protein kinase GSK1, found in Oryza sativa subsp. japonica (Rice).